Reading from the N-terminus, the 467-residue chain is Asparagine--tRNA ligase (467 aa).

Belongs to the class-II aminoacyl-tRNA synthetase family. Homodimer.

Its subcellular location is the cytoplasm. It carries out the reaction tRNA(Asn) + L-asparagine + ATP = L-asparaginyl-tRNA(Asn) + AMP + diphosphate + H(+). This is Asparagine--tRNA ligase from Phocaeicola vulgatus (strain ATCC 8482 / DSM 1447 / JCM 5826 / CCUG 4940 / NBRC 14291 / NCTC 11154) (Bacteroides vulgatus).